The primary structure comprises 64 residues: Large ribosomal subunit protein bL33c (64 aa).

Belongs to the bacterial ribosomal protein bL33 family.

The protein localises to the plastid. It is found in the cyanelle. The protein is Large ribosomal subunit protein bL33c (rpl33) of Cyanophora paradoxa.